A 354-amino-acid chain; its full sequence is Isopentenyl-diphosphate delta-isomerase (354 aa).

Position 11-12 (11-12 (KK)) interacts with substrate. Residues Ser67, 68 to 70 (SMT), Ser98, and Asn126 each bind FMN. 98-100 (SFK) is a substrate binding site. Gln160 is a binding site for substrate. Glu161 serves as a coordination point for Mg(2+). FMN is bound by residues Lys192, Thr222, and 289-290 (AA).

Belongs to the IPP isomerase type 2 family. In terms of assembly, homooctamer. Dimer of tetramers. It depends on FMN as a cofactor. Requires NADPH as cofactor. Mg(2+) is required as a cofactor.

Its subcellular location is the cytoplasm. The enzyme catalyses isopentenyl diphosphate = dimethylallyl diphosphate. In terms of biological role, involved in the biosynthesis of isoprenoids. Catalyzes the 1,3-allylic rearrangement of the homoallylic substrate isopentenyl (IPP) to its allylic isomer, dimethylallyl diphosphate (DMAPP). In Borrelia garinii subsp. bavariensis (strain ATCC BAA-2496 / DSM 23469 / PBi) (Borreliella bavariensis), this protein is Isopentenyl-diphosphate delta-isomerase.